The chain runs to 366 residues: Septin-1 (366 aa).

The Septin-type G domain maps to 22-295 (KGFDFTLMVA…EGYRARCLQS (274 aa)). The segment at 32 to 39 (GESGLGKS) is G1 motif. GTP-binding positions include 32-39 (GESGLGKS), T66, G92, and 171-179 (KADALLPRE). The tract at residues 89-92 (DTPG) is G3 motif. The tract at residues 170-173 (GKAD) is G4 motif. A Phosphoserine modification is found at S206. 2 residues coordinate GTP: G229 and R244. S247 is subject to Phosphoserine; by AURKB. The residue at position 250 (T250) is a Phosphothreonine. 2 positions are modified to phosphoserine; by AURKB: S306 and S314. The interval 347-366 (EKMQAQMQQSQAQGEQSDVL) is disordered. A compositionally biased stretch (low complexity) spans 349 to 366 (MQAQMQQSQAQGEQSDVL).

The protein belongs to the TRAFAC class TrmE-Era-EngA-EngB-Septin-like GTPase superfamily. Septin GTPase family. In terms of assembly, septins polymerize into heterooligomeric protein complexes that form filaments, and can associate with cellular membranes, actin filaments and microtubules. GTPase activity is required for filament formation. Interacts with AURKB.

The protein resides in the cytoplasm. It localises to the cytoskeleton. It is found in the microtubule organizing center. Its subcellular location is the centrosome. The protein localises to the midbody. Functionally, filament-forming cytoskeletal GTPase. May play a role in cytokinesis (Potential). The chain is Septin-1 from Rattus norvegicus (Rat).